A 190-amino-acid chain; its full sequence is Secreted isochorismatase effector Isc1 (190 aa).

Residues Asp-26, Lys-100, and Cys-133 contribute to the active site.

Belongs to the isochorismatase family.

Its subcellular location is the secreted. It is found in the host cytoplasm. It localises to the host nucleus. The enzyme catalyses isochorismate + H2O = (2S,3S)-2,3-dihydroxy-2,3-dihydrobenzoate + pyruvate. Functionally, secreted isochorismatase required for full virulence of V.dahliae. Suppresses salicylate-mediated innate immunity of the host by disrupting the plant salicylate metabolism pathway via hydrolysis of its isochorismate precursor. The sequence is that of Secreted isochorismatase effector Isc1 from Verticillium dahliae (strain VdLs.17 / ATCC MYA-4575 / FGSC 10137) (Verticillium wilt).